A 152-amino-acid polypeptide reads, in one-letter code: Heavy metal-associated isoprenylated plant protein 20 (152 aa).

In terms of domain architecture, HMA spans 27 to 90 (MQTVNIKVKM…RIERTGKKAE (64 aa)). Cd(2+)-binding residues include cysteine 38 and cysteine 41. Cysteine 149 bears the Cysteine methyl ester mark. Residue cysteine 149 is the site of S-farnesyl cysteine attachment. Residues 150-152 (TVM) constitute a propeptide, removed in mature form.

The protein belongs to the HIPP family. As to quaternary structure, interacts with ZHD11/HB29. As to expression, expressed in roots, shoot apical meristem, leaves and flowers.

It is found in the membrane. Functionally, heavy-metal-binding protein. Binds cadmium. May be involved in cadmium transport and play a role in cadmium detoxification. The polypeptide is Heavy metal-associated isoprenylated plant protein 20 (Arabidopsis thaliana (Mouse-ear cress)).